We begin with the raw amino-acid sequence, 763 residues long: MSELLSVALFLASVLIYAWKAGRNTWWFAATLTVLGLFVILNITLYASDYFTGDGINDAVLYTLTNSLTGAGVGKYILPGIGIALALVAVFGALGWVLRRRRHHPHHVGYSLLALLLALGSVDASPAFRQITELVKSQMRDGDPDFAVYYKEPAKTIPNPKLNLVYIYGESLERTYFDNDAFPNLTPELGALKNEGLDFSHTMQLPGTDYTIAGMVASQCGIPLFAPFEGNASASVSSFFPQNICLGDILKNSGYQNYFVQGANLRFAGKDVFLKSHGFDNLYGAEELKTVVADPSYRNDWGFYDDTVLDEAWKKFEALSRSGQRFSLFTLTVDTHHPDGFISRTCNRKRYDYDGKPNQSFSAVSCSQENIAEFINKIKASPWFKDTVIVVSSDHLAMNNTAWKYLNKQDRNNLFFILRGDKPQQETLAVKRNTMDNGATVLDILGGDNFIGLGRNSLSGQSLSEVFLNVKEKVLAMKPDIIRLWNFPKEIKDFTVDRDKNMIAFSGSHFRLPLLLRVSDKRVEPLPESEYSAPLRFQLADFAPRDNFVWIDRCYKMAQLWAPALALSTDWCVSQGQLGGQQTVQHVDKAQWQGKTAFKDTMIDMERYKGNVDTLKIVDNDIRYKADSFIFNVAGAPEEVKQFSGISRPESWGRWSNAQLGDEVKIEYKAPLPKKFDLVITAKAFGDNAERPIPVRVGNEEQTLVLGHDVSTITLHFNNPTDANTLVIAPPAPVSTNEGNILGHSPRKLGIGMVEIKVVNVEG.

Helical transmembrane passes span 1-21 (MSEL…AWKA), 26-46 (WWFA…ITLY), 77-97 (ILPG…LGWV), and 108-128 (VGYS…SPAF).

It belongs to the OpgB family.

Its subcellular location is the cell inner membrane. It carries out the reaction a phosphatidylglycerol + a membrane-derived-oligosaccharide D-glucose = a 1,2-diacyl-sn-glycerol + a membrane-derived-oligosaccharide 6-(glycerophospho)-D-glucose.. It participates in glycan metabolism; osmoregulated periplasmic glucan (OPG) biosynthesis. Transfers a phosphoglycerol residue from phosphatidylglycerol to the membrane-bound nascent glucan backbones. This Salmonella choleraesuis (strain SC-B67) protein is Phosphoglycerol transferase I.